The sequence spans 131 residues: Period circadian protein (131 aa).

Residues 29–109 (VTAPVELDPP…NSAGGASGGV (81 aa)) form a disordered region. Positions 71-93 (SGNFTTGSNVRMSSVTNTSNAGT) are enriched in low complexity. Gly residues predominate over residues 94–109 (GTSGGGNSAGGASGGV).

In terms of assembly, forms a heterodimer with timeless (TIM); the complex then translocates into the nucleus. Phosphorylated with a circadian rhythmicity, probably by the double-time protein (dbt). Phosphorylation could be implicated in the stability of per monomer and in the formation of heterodimer per-tim.

It is found in the nucleus. Its subcellular location is the cytoplasm. The protein localises to the perinuclear region. Functionally, essential for biological clock functions. Determines the period length of circadian and ultradian rhythms; an increase in PER dosage leads to shortened circadian rhythms and a decrease leads to lengthened circadian rhythms. Essential for the circadian rhythmicity of locomotor activity, eclosion behavior, and for the rhythmic component of the male courtship song that originates in the thoracic nervous system. The biological cycle depends on the rhythmic formation and nuclear localization of the TIM-PER complex. Light induces the degradation of TIM, which promotes elimination of PER. Nuclear activity of the heterodimer coordinatively regulates PER and TIM transcription through a negative feedback loop. Behaves as a negative element in circadian transcriptional loop. Does not appear to bind DNA, suggesting indirect transcriptional inhibition. The polypeptide is Period circadian protein (per) (Zaprionus tuberculatus (Vinegar fly)).